A 1687-amino-acid polypeptide reads, in one-letter code: Vitellogenin-2 (1687 aa).

An N-terminal signal peptide occupies residues 1-15 (MRVLVLALTVALVAG). Residues 24-663 (FAPGKTYEYK…DAATVLPKNI (640 aa)) enclose the Vitellogenin domain. N-linked (GlcNAc...) asparagine glycosylation is found at asparagine 941, asparagine 945, asparagine 954, asparagine 1004, asparagine 1019, and asparagine 1083. A disordered region spans residues 1081 to 1174 (LKNSTKASSS…SSSSSKTKWQ (94 aa)). Residues 1088–1127 (SSSSSGSSRSSRSRSSSSSSSSSSSSSSRSSSSSSRSSSS) show a composition bias toward low complexity. Asparagine 1142 carries N-linked (GlcNAc...) asparagine glycosylation. Residues 1148 to 1169 (SSSSSSSSSSSSSSSSSSSSSS) show a composition bias toward low complexity. N-linked (GlcNAc...) asparagine glycosylation is found at asparagine 1179, asparagine 1257, asparagine 1292, asparagine 1342, asparagine 1361, asparagine 1366, and asparagine 1390. The VWFD domain maps to 1417-1593 (AECTVVEDTV…SWVLPAKSCR (177 aa)). 2 disulfide bridges follow: cysteine 1419–cysteine 1556 and cysteine 1442–cysteine 1592. N-linked (GlcNAc...) asparagine glycosylation is found at asparagine 1577 and asparagine 1655.

Phosvitin, an egg yolk storage protein, is one of the most highly phosphorylated (10%) proteins in nature. As to expression, produced by the liver, secreted into the blood and then sequestered by receptor mediated endocytosis into growing oocytes, where it is generally cleaved, giving rise to the respective yolk components lipovitellins and phosvitin.

Functionally, precursor of the egg-yolk proteins that are sources of nutrients during early development of oviparous organisms. This is Vitellogenin-2 from Fundulus heteroclitus (Killifish).